A 304-amino-acid chain; its full sequence is N-acetylmuramic acid 6-phosphate etherase 1 (304 aa).

A compositionally biased stretch (polar residues) spans 1–10; sequence MENSHLGSLT. Residues 1–20 are disordered; the sequence is MENSHLGSLTTERRNERSKR. The SIS domain maps to 58 to 221; sequence AVGSLKKGGR…STAAMIKMGK (164 aa). Catalysis depends on Glu86, which acts as the Proton donor. Residue Glu117 is part of the active site.

This sequence belongs to the GCKR-like family. MurNAc-6-P etherase subfamily. As to quaternary structure, homodimer.

It catalyses the reaction N-acetyl-D-muramate 6-phosphate + H2O = N-acetyl-D-glucosamine 6-phosphate + (R)-lactate. It participates in amino-sugar metabolism; N-acetylmuramate degradation. Functionally, specifically catalyzes the cleavage of the D-lactyl ether substituent of MurNAc 6-phosphate, producing GlcNAc 6-phosphate and D-lactate. In Bacillus licheniformis (strain ATCC 14580 / DSM 13 / JCM 2505 / CCUG 7422 / NBRC 12200 / NCIMB 9375 / NCTC 10341 / NRRL NRS-1264 / Gibson 46), this protein is N-acetylmuramic acid 6-phosphate etherase 1.